Reading from the N-terminus, the 536-residue chain is CTP synthase (536 aa).

Residues 1-267 form an amidoligase domain region; the sequence is MSKFVFVTGG…CKETLKYLEL (267 aa). Serine 13 lines the CTP pocket. Serine 13 contacts UTP. ATP contacts are provided by residues 14 to 19 and aspartate 71; that span reads SIGKGI. Positions 71 and 141 each coordinate Mg(2+). Residues 148–150, 188–193, and lysine 224 each bind CTP; these read DIE and KTKPTQ. UTP-binding positions include 188–193 and lysine 224; that span reads KTKPTQ. The region spanning 292 to 534 is the Glutamine amidotransferase type-1 domain; sequence KVALVGKYIE…IKSSQENLTQ (243 aa). Position 354 (glycine 354) interacts with L-glutamine. Catalysis depends on cysteine 381, which acts as the Nucleophile; for glutamine hydrolysis. L-glutamine-binding positions include 382 to 385, glutamate 405, and arginine 462; that span reads LGMQ. Residues histidine 507 and glutamate 509 contribute to the active site.

Belongs to the CTP synthase family. In terms of assembly, homotetramer.

The catalysed reaction is UTP + L-glutamine + ATP + H2O = CTP + L-glutamate + ADP + phosphate + 2 H(+). It catalyses the reaction L-glutamine + H2O = L-glutamate + NH4(+). It carries out the reaction UTP + NH4(+) + ATP = CTP + ADP + phosphate + 2 H(+). It participates in pyrimidine metabolism; CTP biosynthesis via de novo pathway; CTP from UDP: step 2/2. Allosterically activated by GTP, when glutamine is the substrate; GTP has no effect on the reaction when ammonia is the substrate. The allosteric effector GTP functions by stabilizing the protein conformation that binds the tetrahedral intermediate(s) formed during glutamine hydrolysis. Inhibited by the product CTP, via allosteric rather than competitive inhibition. Its function is as follows. Catalyzes the ATP-dependent amination of UTP to CTP with either L-glutamine or ammonia as the source of nitrogen. Regulates intracellular CTP levels through interactions with the four ribonucleotide triphosphates. In Prochlorococcus marinus (strain MIT 9312), this protein is CTP synthase.